The following is a 357-amino-acid chain: Protein-glutamate methylesterase/protein-glutamine glutaminase (357 aa).

Residues 3–120 (RVIVVDDSAF…LASMDLAALS (118 aa)) form the Response regulatory domain. Asp-54 carries the 4-aspartylphosphate modification. A CheB-type methylesterase domain is found at 165-357 (ERSRRDIIAI…AERVASALYK (193 aa)). Catalysis depends on residues Ser-177, His-204, and Asp-300.

The protein belongs to the CheB family. Phosphorylated by CheA. Phosphorylation of the N-terminal regulatory domain activates the methylesterase activity.

The protein resides in the cytoplasm. It carries out the reaction [protein]-L-glutamate 5-O-methyl ester + H2O = L-glutamyl-[protein] + methanol + H(+). The enzyme catalyses L-glutaminyl-[protein] + H2O = L-glutamyl-[protein] + NH4(+). Involved in chemotaxis. Part of a chemotaxis signal transduction system that modulates chemotaxis in response to various stimuli. Catalyzes the demethylation of specific methylglutamate residues introduced into the chemoreceptors (methyl-accepting chemotaxis proteins or MCP) by CheR. Also mediates the irreversible deamidation of specific glutamine residues to glutamic acid. This Lawsonia intracellularis (strain PHE/MN1-00) protein is Protein-glutamate methylesterase/protein-glutamine glutaminase.